The following is a 210-amino-acid chain: Thiamine-phosphate synthase (210 aa).

Residues 34 to 38 and Asn66 each bind 4-amino-2-methyl-5-(diphosphooxymethyl)pyrimidine; that span reads QLRHK. 2 residues coordinate Mg(2+): Asp67 and Asp86. Ser105 contacts 4-amino-2-methyl-5-(diphosphooxymethyl)pyrimidine. Position 131–133 (131–133) interacts with 2-[(2R,5Z)-2-carboxy-4-methylthiazol-5(2H)-ylidene]ethyl phosphate; sequence TSS. Lys134 provides a ligand contact to 4-amino-2-methyl-5-(diphosphooxymethyl)pyrimidine. Residue Gly162 coordinates 2-[(2R,5Z)-2-carboxy-4-methylthiazol-5(2H)-ylidene]ethyl phosphate.

The protein belongs to the thiamine-phosphate synthase family. Requires Mg(2+) as cofactor.

It catalyses the reaction 2-[(2R,5Z)-2-carboxy-4-methylthiazol-5(2H)-ylidene]ethyl phosphate + 4-amino-2-methyl-5-(diphosphooxymethyl)pyrimidine + 2 H(+) = thiamine phosphate + CO2 + diphosphate. The enzyme catalyses 2-(2-carboxy-4-methylthiazol-5-yl)ethyl phosphate + 4-amino-2-methyl-5-(diphosphooxymethyl)pyrimidine + 2 H(+) = thiamine phosphate + CO2 + diphosphate. It carries out the reaction 4-methyl-5-(2-phosphooxyethyl)-thiazole + 4-amino-2-methyl-5-(diphosphooxymethyl)pyrimidine + H(+) = thiamine phosphate + diphosphate. The protein operates within cofactor biosynthesis; thiamine diphosphate biosynthesis; thiamine phosphate from 4-amino-2-methyl-5-diphosphomethylpyrimidine and 4-methyl-5-(2-phosphoethyl)-thiazole: step 1/1. Its function is as follows. Condenses 4-methyl-5-(beta-hydroxyethyl)thiazole monophosphate (THZ-P) and 2-methyl-4-amino-5-hydroxymethyl pyrimidine pyrophosphate (HMP-PP) to form thiamine monophosphate (TMP). In Chlorobium limicola (strain DSM 245 / NBRC 103803 / 6330), this protein is Thiamine-phosphate synthase.